We begin with the raw amino-acid sequence, 317 residues long: Prenyl transferase paxC (317 aa).

Substrate is bound by residues Lys53 and His86. Mg(2+) contacts are provided by Asp93 and Asp97. Substrate-binding residues include Arg102, Lys186, Thr187, Gln216, Asn223, and Lys233.

This sequence belongs to the FPP/GGPP synthase family.

It participates in secondary metabolite biosynthesis. Prenyl transferase; part of the gene cluster that mediates the biosynthesis of paxalline, a mycotoxin that acts as an inhibitor of mammalian maxi-K channels. PaxG, the geranylgeranyl diphosphate (GGPP) synthase is proposed to catalyze the first step in paxilline biosynthesis. Condensation of indole-3-glycerol phosphate with GGPP by paxC then forms 3-geranylgeranylindole (3-GGI), followed by epoxidation and cyclization of this intermediate (by paxM and paxB) to form paspaline. Paspaline is subsequently converted to 13-desoxypaxilline by paxP, the latter being then converted to paxilline by paxQ. Finally paxilline can be mono- and di-prenylated by paxD. This Penicillium paxilli protein is Prenyl transferase paxC.